Here is a 182-residue protein sequence, read N- to C-terminus: Adenylate kinase (182 aa).

12–17 (GAGKGT) contributes to the ATP binding site. The NMP stretch occupies residues 32 to 61 (STGDLLRAEVKAGSELGKEAEAVMNRGELV). Residues T33, R38, 59-61 (ELV), 85-88 (GFPR), and Q92 contribute to the AMP site. Positions 126–132 (ARGRADD) are LID. R127 is an ATP binding site. AMP-binding residues include R129 and R140. G168 lines the ATP pocket.

Belongs to the adenylate kinase family. In terms of assembly, monomer.

It is found in the cytoplasm. The enzyme catalyses AMP + ATP = 2 ADP. Its pathway is purine metabolism; AMP biosynthesis via salvage pathway; AMP from ADP: step 1/1. Its function is as follows. Catalyzes the reversible transfer of the terminal phosphate group between ATP and AMP. Plays an important role in cellular energy homeostasis and in adenine nucleotide metabolism. The protein is Adenylate kinase of Synechococcus sp. (strain RCC307).